The sequence spans 344 residues: KRR1 small subunit processome component homolog (344 aa).

The 69-residue stretch at 125–193 (DIIKIGNLVH…VRDIVLETMN (69 aa)) folds into the KH domain. Over residues 232 to 245 (NISKRKQPKVKKQK) the composition is skewed to basic residues. 2 disordered regions span residues 232-260 (NISK…ESKV) and 273-326 (QEQK…TKVD). The stretch at 270 to 295 (FLNQEQKQAKRNQGRTEKQKEAAKRQ) forms a coiled coil. 2 stretches are compositionally biased toward basic and acidic residues: residues 283 to 302 (GRTE…RNKD) and 315 to 326 (RKKEDGSSTKVD).

The protein belongs to the KRR1 family. As to quaternary structure, monomer. Component of the ribosomal small subunit (SSU) processome.

It is found in the nucleus. The protein localises to the nucleolus. Its function is as follows. Required for 40S ribosome biogenesis. Involved in nucleolar processing of pre-18S ribosomal RNA and ribosome assembly. Binds to RNA. Required for female germline development, cell viability during eye development and for survival of dividing cells and epithelial cells during early wing disk development. This is KRR1 small subunit processome component homolog from Drosophila yakuba (Fruit fly).